The following is a 127-amino-acid chain: Small ribosomal subunit protein uS13 (127 aa).

The segment at 90 to 127 (RRHRQGLPVRGQRTRTNARTRRGRRLTVAGKKKTPAKK) is disordered. Basic residues predominate over residues 101–127 (QRTRTNARTRRGRRLTVAGKKKTPAKK).

The protein belongs to the universal ribosomal protein uS13 family. Part of the 30S ribosomal subunit. Forms a loose heterodimer with protein S19. Forms two bridges to the 50S subunit in the 70S ribosome.

In terms of biological role, located at the top of the head of the 30S subunit, it contacts several helices of the 16S rRNA. In the 70S ribosome it contacts the 23S rRNA (bridge B1a) and protein L5 of the 50S subunit (bridge B1b), connecting the 2 subunits; these bridges are implicated in subunit movement. Contacts the tRNAs in the A and P-sites. The sequence is that of Small ribosomal subunit protein uS13 from Synechocystis sp. (strain ATCC 27184 / PCC 6803 / Kazusa).